A 348-amino-acid polypeptide reads, in one-letter code: MTEASRIVAPERHADDVGDTALRPQKLSEFIGQRQARANLQIFIDAARKREEALDHVLFVGPPGLGKTTLAQIVARELGVGFRATSGPVIAKAGDLAALLTNLEERDVLFIDEIHRLSPAVEEVLYPAMEDFQLDLIIGEGPAARSVKIELAKFTLVGATTRAGLLTNPLRDRFGIPVRLNFYTEDELEKIVSRGARVLNVGMTPDGANEIARRARGTPRIAGRLLRRVRDFAEAADAAAIDRAVADHALGALEVDAAGLDAMDRRYLTTIALSYGGGPVGVETMAAALSEPRDAIEDIIEPYLIQCGYLQRTPRGRLLTSHAFRHLGLTEPSRDPAQSGLFGQDEDR.

The tract at residues 1 to 183 (MTEASRIVAP…FGIPVRLNFY (183 aa)) is large ATPase domain (RuvB-L). Residues Leu-22, Arg-23, Gly-64, Lys-67, Thr-68, Thr-69, 130–132 (EDF), Arg-173, Tyr-183, and Arg-220 each bind ATP. Residue Thr-68 coordinates Mg(2+). A small ATPAse domain (RuvB-S) region spans residues 184 to 254 (TEDELEKIVS…VADHALGALE (71 aa)). Positions 257–348 (AAGLDAMDRR…SGLFGQDEDR (92 aa)) are head domain (RuvB-H). DNA-binding residues include Arg-293, Arg-312, and Arg-317. The interval 329–348 (LTEPSRDPAQSGLFGQDEDR) is disordered.

It belongs to the RuvB family. As to quaternary structure, homohexamer. Forms an RuvA(8)-RuvB(12)-Holliday junction (HJ) complex. HJ DNA is sandwiched between 2 RuvA tetramers; dsDNA enters through RuvA and exits via RuvB. An RuvB hexamer assembles on each DNA strand where it exits the tetramer. Each RuvB hexamer is contacted by two RuvA subunits (via domain III) on 2 adjacent RuvB subunits; this complex drives branch migration. In the full resolvosome a probable DNA-RuvA(4)-RuvB(12)-RuvC(2) complex forms which resolves the HJ.

Its subcellular location is the cytoplasm. It catalyses the reaction ATP + H2O = ADP + phosphate + H(+). Functionally, the RuvA-RuvB-RuvC complex processes Holliday junction (HJ) DNA during genetic recombination and DNA repair, while the RuvA-RuvB complex plays an important role in the rescue of blocked DNA replication forks via replication fork reversal (RFR). RuvA specifically binds to HJ cruciform DNA, conferring on it an open structure. The RuvB hexamer acts as an ATP-dependent pump, pulling dsDNA into and through the RuvAB complex. RuvB forms 2 homohexamers on either side of HJ DNA bound by 1 or 2 RuvA tetramers; 4 subunits per hexamer contact DNA at a time. Coordinated motions by a converter formed by DNA-disengaged RuvB subunits stimulates ATP hydrolysis and nucleotide exchange. Immobilization of the converter enables RuvB to convert the ATP-contained energy into a lever motion, pulling 2 nucleotides of DNA out of the RuvA tetramer per ATP hydrolyzed, thus driving DNA branch migration. The RuvB motors rotate together with the DNA substrate, which together with the progressing nucleotide cycle form the mechanistic basis for DNA recombination by continuous HJ branch migration. Branch migration allows RuvC to scan DNA until it finds its consensus sequence, where it cleaves and resolves cruciform DNA. This Nitrobacter winogradskyi (strain ATCC 25391 / DSM 10237 / CIP 104748 / NCIMB 11846 / Nb-255) protein is Holliday junction branch migration complex subunit RuvB.